We begin with the raw amino-acid sequence, 891 residues long: Translation initiation factor IF-2 (891 aa).

A disordered region spans residues 50–303 (KKEHGSADES…TSMQHGFDKS (254 aa)). Basic and acidic residues-rich tracts occupy residues 102–237 (TLEE…KTAD) and 245–261 (HARE…EQQP). The tr-type G domain occupies 390–559 (GRAPVVTIMG…LLQSEVLELT (170 aa)). The interval 399–406 (GHVDHGKT) is G1. GTP is bound at residue 399 to 406 (GHVDHGKT). The tract at residues 424 to 428 (GITQH) is G2. Residues 445-448 (DTPG) form a G3 region. GTP contacts are provided by residues 445-449 (DTPGH) and 499-502 (NKID). The tract at residues 499–502 (NKID) is G4. Residues 535-537 (SAK) form a G5 region.

This sequence belongs to the TRAFAC class translation factor GTPase superfamily. Classic translation factor GTPase family. IF-2 subfamily.

It localises to the cytoplasm. Its function is as follows. One of the essential components for the initiation of protein synthesis. Protects formylmethionyl-tRNA from spontaneous hydrolysis and promotes its binding to the 30S ribosomal subunits. Also involved in the hydrolysis of GTP during the formation of the 70S ribosomal complex. This is Translation initiation factor IF-2 from Aliivibrio salmonicida (strain LFI1238) (Vibrio salmonicida (strain LFI1238)).